The following is a 442-amino-acid chain: Ribosome biogenesis protein NOP53 (442 aa).

Positions Lys-242 to Val-264 are disordered.

It belongs to the NOP53 family.

It localises to the nucleus. The protein localises to the nucleolus. It is found in the nucleoplasm. Functionally, may play a role in ribosome biogenesis. This Arabidopsis thaliana (Mouse-ear cress) protein is Ribosome biogenesis protein NOP53.